The primary structure comprises 180 residues: Ribulose bisphosphate carboxylase small subunit, chloroplastic 4 (180 aa).

A chloroplast-targeting transit peptide spans 1-56 (MASSIVSSAAVATRANGAQASMVGPFTGLKSTASFPVSRKQNLDITSIASNGGRVR).

It belongs to the RuBisCO small chain family. In terms of assembly, heterohexadecamer of 8 large and 8 small subunits.

It is found in the plastid. Its subcellular location is the chloroplast. In terms of biological role, ruBisCO catalyzes two reactions: the carboxylation of D-ribulose 1,5-bisphosphate, the primary event in carbon dioxide fixation, as well as the oxidative fragmentation of the pentose substrate. Both reactions occur simultaneously and in competition at the same active site. Although the small subunit is not catalytic it is essential for maximal activity. The polypeptide is Ribulose bisphosphate carboxylase small subunit, chloroplastic 4 (Solanum tuberosum (Potato)).